The following is a 341-amino-acid chain: Coiled-coil domain-containing protein 86 (341 aa).

A disordered region spans residues 1–341 (MGTPLRRSRR…QPPQRPVAKV (341 aa)). S18 is modified (phosphoserine). The span at 26 to 49 (EVSRAKRALVDFKSNPEETRELES) shows a compositional bias: basic and acidic residues. S59 carries the post-translational modification Phosphoserine. The segment covering 64–73 (PETSPESPCP) has biased composition (low complexity). T66 is subject to Phosphothreonine. S67, S70, S81, S92, S103, S114, and S124 each carry phosphoserine. Positions 105 to 114 (AGQTESNPES) are enriched in polar residues. Basic and acidic residues predominate over residues 130–139 (EVAHAKEEVI). 4 positions are modified to phosphoserine: S142, S169, S170, and S200. A compositionally biased stretch (basic residues) spans 219 to 235 (GKPKSGRVWKDRSKKRF). Residues 254–298 (ERQERKLAKDFARHLEEEKQRRRQEKKERRAENLRRRLENERKAE) are compositionally biased toward basic and acidic residues. The stretch at 261–304 (AKDFARHLEEEKQRRRQEKKERRAENLRRRLENERKAEIVQVIR) forms a coiled coil. A compositionally biased stretch (basic residues) spans 307 to 317 (AKLKKAKKKQL). The residue at position 323 (R323) is a Citrulline.

In terms of processing, citrullinated by PADI4.

It is found in the nucleus. It localises to the chromosome. Its subcellular location is the nucleolus. In terms of biological role, required for proper chromosome segregation during mitosis and error-free mitotic progression. The polypeptide is Coiled-coil domain-containing protein 86 (Rattus norvegicus (Rat)).